The primary structure comprises 1026 residues: Multidrug resistance protein MdtC (1026 aa).

11 helical membrane passes run 15–35 (ILIAAAITLCGILGFRLLPVA), 333–353 (EVEETLAISVALVIMVVFLFL), 360–380 (LIPAVAVPVSLIGTFAAMYLC), 387–407 (LSLMALTIATGFVVDDAIVVL), 431–451 (VGFTVISMSLSLVAVFLPLLL), 463–483 (FAVTLSVAIGISLVVSLTLTP), 528–548 (LVGVVFLGTVALNIWLYIAIP), 853–873 (LILIVAAIATVYIVLGILYES), 897–917 (LFNAPFSLIALIGIMLLIGIV), 953–973 (PIMMTTLAALFGALPLVLSGG), and 984–1004 (ITIVGGLVMSQLLTLYTTPVV).

The protein belongs to the resistance-nodulation-cell division (RND) (TC 2.A.6) family. MdtC subfamily. Part of a tripartite efflux system composed of MdtA, MdtB and MdtC. MdtC forms a heteromultimer with MdtB.

It localises to the cell inner membrane. The sequence is that of Multidrug resistance protein MdtC from Salmonella paratyphi C (strain RKS4594).